Here is a 46-residue protein sequence, read N- to C-terminus: Iota-conotoxin-like Fi11.8 (46 aa).

Pro2 and Pro11 each carry 4-hydroxyproline. Disulfide bonds link Cys5–Cys19, Cys12–Cys22, Cys18–Cys27, and Cys21–Cys38. Pro29 carries the 4-hydroxyproline modification. Trp33 is subject to 6'-bromotryptophan. Phe44 carries the post-translational modification D-phenylalanine.

Belongs to the conotoxin I1 superfamily. In terms of tissue distribution, expressed by the venom duct.

The protein resides in the secreted. Functionally, iota-conotoxins bind to voltage-gated sodium channels (Nav) and act as agonists by shifting the voltage-dependence of activation to more hyperpolarized levels. Produces general excitatory symptoms. The sequence is that of Iota-conotoxin-like Fi11.8 from Conus figulinus (Fig cone).